Consider the following 74-residue polypeptide: uncharacterized protein (74 aa).

This is an uncharacterized protein from Enterobacteria phage T4 (Bacteriophage T4).